Reading from the N-terminus, the 112-residue chain is Prothymosin alpha-B (112 aa).

Residues methionine 1 to aspartate 112 are disordered. Over residues serine 9 to proline 35 the composition is skewed to basic and acidic residues. Composition is skewed to acidic residues over residues glutamate 41 to glutamate 83 and glutamate 92 to valine 101. Residues glutamate 102–aspartate 112 show a composition bias toward basic and acidic residues.

The protein belongs to the pro/parathymosin family.

The protein resides in the nucleus. The polypeptide is Prothymosin alpha-B (ptma-b) (Xenopus laevis (African clawed frog)).